A 525-amino-acid chain; its full sequence is Alpha-ketoglutaric semialdehyde dehydrogenase 2 (525 aa).

Residues Lys-185, Glu-188, and 242–247 (GSRQGG) each bind NAD(+). Glu-266 serves as the catalytic Proton acceptor. Cys-303 serves as the catalytic Nucleophile. An NAD(+)-binding site is contributed by Glu-394.

The protein belongs to the aldehyde dehydrogenase family. Homodimer.

The catalysed reaction is 2,5-dioxopentanoate + NADP(+) + H2O = 2-oxoglutarate + NADPH + 2 H(+). It catalyses the reaction 2,5-dioxopentanoate + NAD(+) + H2O = 2-oxoglutarate + NADH + 2 H(+). It functions in the pathway carbohydrate acid metabolism; D-glucarate degradation. The protein operates within carbohydrate acid metabolism; galactarate degradation. Catalyzes the NAD(P)(+)-dependent oxidation of alpha-ketoglutaric semialdehyde (alphaKGSA) to alpha-ketoglutarate. Involved in D-glucarate/D-galactarate metabolism. Prefers NAD(+) to NADP(+) as a cosubstrate. This Azospirillum brasilense protein is Alpha-ketoglutaric semialdehyde dehydrogenase 2.